The sequence spans 298 residues: Ribosomal RNA small subunit methyltransferase H (298 aa).

S-adenosyl-L-methionine contacts are provided by residues 37 to 39 (GGH), D57, L91, D105, and Q112.

The protein belongs to the methyltransferase superfamily. RsmH family.

It localises to the cytoplasm. It catalyses the reaction cytidine(1402) in 16S rRNA + S-adenosyl-L-methionine = N(4)-methylcytidine(1402) in 16S rRNA + S-adenosyl-L-homocysteine + H(+). Its function is as follows. Specifically methylates the N4 position of cytidine in position 1402 (C1402) of 16S rRNA. This chain is Ribosomal RNA small subunit methyltransferase H, found in Kosmotoga olearia (strain ATCC BAA-1733 / DSM 21960 / TBF 19.5.1).